The chain runs to 173 residues: Disulfide bond formation protein B (173 aa).

Topologically, residues 1–11 (MNALQWSFRAQ) are cytoplasmic. The chain crosses the membrane as a helical span at residues 12-28 (CLTGFLFCTGLLAYAIF). The Periplasmic portion of the chain corresponds to 29–46 (LQLHQGLEPCPLCIFQRI). Residues C38 and C41 are joined by a disulfide bond. Residues 47–63 (AFAVLGILFLIAGLYNS) traverse the membrane as a helical segment. Residues 64–70 (SNVYTRK) are Cytoplasmic-facing. The chain crosses the membrane as a helical span at residues 71 to 88 (AYGLLIFLTAAIGTGIAG). Residues 89–145 (RHVWVQLMPHNTISSCGSPLSFLSETMGPFEVFRTVLTGTSDCGNIDWRFLGLSMPM) are Periplasmic-facing. The cysteines at positions 104 and 131 are disulfide-linked. A helical membrane pass occupies residues 146–164 (WSMFWFVALALLGLLVGFK). At 165–173 (AERRKPLFS) the chain is on the cytoplasmic side.

This sequence belongs to the DsbB family.

Its subcellular location is the cell inner membrane. Required for disulfide bond formation in some periplasmic proteins. Acts by oxidizing the DsbA protein. The polypeptide is Disulfide bond formation protein B (Xylella fastidiosa (strain 9a5c)).